Consider the following 452-residue polypeptide: Keratin, type II cytoskeletal 80 (452 aa).

Residues 1 to 82 (MAYRSCVVGF…DPAVQQQKNQ (82 aa)) are head. The residue at position 45 (Ser-45) is a Phosphoserine. Positions 82–118 (QEKEEMKALNDKFASLIGKVQALEQRNQLLETRWSFL) are coil 1A. In terms of domain architecture, IF rod spans 83–394 (EKEEMKALND…KLMEGEESRM (312 aa)). A linker 1 region spans residues 119-135 (QGQGSATFDLSHHYETF). The segment at 136 to 227 (QGRLQEELRK…TVYEQELKDL (92 aa)) is coil 1B. Residues 228–251 (TAQVKDVSVTVGLDSRCHIDLSGI) are linker 12. The tract at residues 252–390 (VEEVKAQYDA…ATYHKLMEGE (139 aa)) is coil 2. A tail region spans residues 391-452 (ESRMDLPSAT…YLSQESEASE (62 aa)). The tract at residues 412-452 (TASKSGLTKTSSRKKKNRRGPVIKITEMSEKYLSQESEASE) is disordered. Over residues 422–432 (SSRKKKNRRGP) the composition is skewed to basic residues. A compositionally biased stretch (polar residues) spans 443-452 (YLSQESEASE).

This sequence belongs to the intermediate filament family. In terms of assembly, heterotetramer of two type I and two type II keratins.

In Mus musculus (Mouse), this protein is Keratin, type II cytoskeletal 80 (Krt80).